The following is a 272-amino-acid chain: Putative phosphoenolpyruvate synthase regulatory protein (272 aa).

Residue G152 to T159 participates in ADP binding.

It belongs to the pyruvate, phosphate/water dikinase regulatory protein family. PSRP subfamily.

It catalyses the reaction [pyruvate, water dikinase] + ADP = [pyruvate, water dikinase]-phosphate + AMP + H(+). The enzyme catalyses [pyruvate, water dikinase]-phosphate + phosphate + H(+) = [pyruvate, water dikinase] + diphosphate. Its function is as follows. Bifunctional serine/threonine kinase and phosphorylase involved in the regulation of the phosphoenolpyruvate synthase (PEPS) by catalyzing its phosphorylation/dephosphorylation. The sequence is that of Putative phosphoenolpyruvate synthase regulatory protein from Hahella chejuensis (strain KCTC 2396).